The primary structure comprises 342 residues: N-acetyl-gamma-glutamyl-phosphate reductase (342 aa).

C149 is a catalytic residue.

The protein belongs to the NAGSA dehydrogenase family. Type 1 subfamily.

The protein localises to the cytoplasm. It carries out the reaction N-acetyl-L-glutamate 5-semialdehyde + phosphate + NADP(+) = N-acetyl-L-glutamyl 5-phosphate + NADPH + H(+). The protein operates within amino-acid biosynthesis; L-arginine biosynthesis; N(2)-acetyl-L-ornithine from L-glutamate: step 3/4. Its function is as follows. Catalyzes the NADPH-dependent reduction of N-acetyl-5-glutamyl phosphate to yield N-acetyl-L-glutamate 5-semialdehyde. The protein is N-acetyl-gamma-glutamyl-phosphate reductase of Aromatoleum aromaticum (strain DSM 19018 / LMG 30748 / EbN1) (Azoarcus sp. (strain EbN1)).